Consider the following 438-residue polypeptide: Xylose isomerase (438 aa).

Catalysis depends on residues histidine 103 and aspartate 106. 7 residues coordinate Mg(2+): glutamate 234, glutamate 270, histidine 273, aspartate 298, aspartate 309, aspartate 311, and aspartate 341.

It belongs to the xylose isomerase family. As to quaternary structure, homotetramer. Requires Mg(2+) as cofactor.

Its subcellular location is the cytoplasm. It carries out the reaction alpha-D-xylose = alpha-D-xylulofuranose. The chain is Xylose isomerase from Phocaeicola vulgatus (strain ATCC 8482 / DSM 1447 / JCM 5826 / CCUG 4940 / NBRC 14291 / NCTC 11154) (Bacteroides vulgatus).